Consider the following 125-residue polypeptide: Photosystem II extrinsic protein U (125 aa).

A signal peptide spans 1-29 (MKRLLSWLTGLVVMAGLLFSLATPSGVQA).

Belongs to the PsbU family. PSII is composed of 1 copy each of membrane proteins PsbA, PsbB, PsbC, PsbD, PsbE, PsbF, PsbH, PsbI, PsbJ, PsbK, PsbL, PsbM, PsbT, PsbX, PsbY, PsbZ, Psb30/Ycf12, peripheral proteins PsbO, CyanoQ (PsbQ), PsbU, PsbV and a large number of cofactors. It forms dimeric complexes.

It localises to the cellular thylakoid membrane. In terms of biological role, one of the extrinsic, lumenal subunits of photosystem II (PSII). PSII is a light-driven water plastoquinone oxidoreductase, using light energy to abstract electrons from H(2)O, generating a proton gradient subsequently used for ATP formation. The extrinsic proteins stabilize the structure of photosystem II oxygen-evolving complex (OEC), the ion environment of oxygen evolution and protect the OEC against heat-induced inactivation. This chain is Photosystem II extrinsic protein U, found in Synechococcus sp. (strain WH7803).